The following is a 288-amino-acid chain: ATP synthase gamma chain (288 aa).

The protein belongs to the ATPase gamma chain family. F-type ATPases have 2 components, CF(1) - the catalytic core - and CF(0) - the membrane proton channel. CF(1) has five subunits: alpha(3), beta(3), gamma(1), delta(1), epsilon(1). CF(0) has three main subunits: a, b and c.

It is found in the cell inner membrane. Produces ATP from ADP in the presence of a proton gradient across the membrane. The gamma chain is believed to be important in regulating ATPase activity and the flow of protons through the CF(0) complex. The polypeptide is ATP synthase gamma chain (Paracidovorax citrulli (strain AAC00-1) (Acidovorax citrulli)).